Here is a 788-residue protein sequence, read N- to C-terminus: Spastin (788 aa).

The disordered stretch occupies residues 1 to 105 (MVRTKNQSSS…PRSAGGPSSV (105 aa)). Over 1 to 116 (MVRTKNQSSS…KQNLYVVSFP (116 aa)) the chain is Cytoplasmic. A required for localization to punctate cytoplasmic foci region spans residues 1-227 (MVRTKNQSSS…NRSGSGYSPG (227 aa)). 2 stretches are compositionally biased toward low complexity: residues 8–48 (SSSS…SSHR) and 57–75 (ATNVSSSSNRRTTPGSSPD). Positions 117 to 137 (IIFLFNVLRSLIYQLFCIFRY) form an intramembrane region, helical. Residues 138–788 (LYGASTKVIY…WSSDYGDITI (651 aa)) lie on the Cytoplasmic side of the membrane. The sufficient for interaction with microtubules and microtubule severing stretch occupies residues 227 to 788 (GPGDPLLAKQ…WSSDYGDITI (562 aa)). Residues 240 to 315 (HRRAFEYISK…SMARDRLHFL (76 aa)) enclose the MIT domain. The segment covering 330-353 (KEEQKPNPSREQHQKPQKAREAAD) has biased composition (basic and acidic residues). A disordered region spans residues 330-484 (KEEQKPNPSR…SGSGSGASTP (155 aa)). The segment covering 380-400 (LTTPRISATATTPTSSSSLAS) has biased composition (low complexity). Composition is skewed to polar residues over residues 419–433 (NKSQTLPRNLGSKTS) and 453–469 (QFSSGRNTPPQRSRTPI). Residues 471–485 (NNGASGSGSGASTPV) form a required for interaction with microtubules region. 553-560 (GPPGNGKT) contributes to the ATP binding site.

It belongs to the AAA ATPase family. Spastin subfamily. Homohexamer. The homohexamer is stabilized by ATP-binding. The homohexamer may adopt a ring conformation through which microtubules pass prior to being severed. Interacts with microtubules. Interacts with atl; may be involved in microtubule dynamics.

It localises to the membrane. The protein resides in the cytoplasm. It is found in the cytoskeleton. Its subcellular location is the microtubule organizing center. The protein localises to the centrosome. It localises to the chromosome. The protein resides in the lipid droplet. The enzyme catalyses n ATP + n H2O + a microtubule = n ADP + n phosphate + (n+1) alpha/beta tubulin heterodimers.. Its function is as follows. ATP-dependent microtubule severing protein. Stimulates microtubule minus-end depolymerization and poleward microtubule flux in the mitotic spindle. Regulates microtubule stability in the neuromuscular junction synapse. Involved in lipid metabolism by regulating the size and distribution of lipid droplets. Involved in axon regeneration by regulating microtubule severing. This Drosophila pseudoobscura pseudoobscura (Fruit fly) protein is Spastin.